The primary structure comprises 396 residues: Tetracycline resistance protein, class C (396 aa).

At Met1–Ala6 the chain is on the cytoplasmic side. Residues Leu7–Val27 form a helical membrane-spanning segment. Topologically, residues Leu28 to Tyr45 are periplasmic. Residues Gly46–Leu66 traverse the membrane as a helical segment. Residues Ser67–Ser79 are Cytoplasmic-facing. The chain crosses the membrane as a helical span at residues Leu80–Tyr100. Topologically, residues Ala101 to Arg103 are periplasmic. A helical membrane pass occupies residues Ile104 to Thr124. Over Asp125–Ala138 the chain is Cytoplasmic. A helical transmembrane segment spans residues Cys139–Leu159. Position 160 (His160) is a topological domain, periplasmic. The helical transmembrane segment at Ala161–Met181 threads the bilayer. The Cytoplasmic segment spans residues Gln182 to Thr210. A helical transmembrane segment spans residues Ile211 to Ala231. The Periplasmic segment spans residues Leu232–Thr246. Residues Met247–Thr267 form a helical membrane-spanning segment. At Gly268–Lys277 the chain is on the cytoplasmic side. The helical transmembrane segment at Gln278–Thr298 threads the bilayer. Residue Arg299 is a topological domain, periplasmic. The chain crosses the membrane as a helical span at residues Gly300 to Leu320. The Cytoplasmic segment spans residues Gln321–Ser339. Residues Leu340–Ala360 form a helical membrane-spanning segment. The Periplasmic portion of the chain corresponds to Ala361–Ser364. Residues Thr365 to Leu385 traverse the membrane as a helical segment. At Arg386 to Thr396 the chain is on the cytoplasmic side.

Belongs to the major facilitator superfamily. TCR/Tet family.

It is found in the cell inner membrane. Resistance to tetracycline by an active tetracycline efflux. This is an energy-dependent process that decreases the accumulation of the antibiotic in whole cells. This protein functions as a metal-tetracycline/H(+) antiporter. The chain is Tetracycline resistance protein, class C (tetA) from Escherichia coli.